The primary structure comprises 529 residues: Ribonuclease Y (529 aa).

A helical membrane pass occupies residues 4–24 (GLIYISLEVLVACLITALIMY). The KH domain maps to 216-297 (LTTRIALPCS…NRIEEVYHRV (82 aa)). Positions 342–435 (ALQHSKEVAL…VCAADALSAG (94 aa)) constitute an HD domain.

The protein belongs to the RNase Y family.

It is found in the cell membrane. Functionally, endoribonuclease that initiates mRNA decay. The protein is Ribonuclease Y of Helicobacter pylori (strain HPAG1).